The primary structure comprises 340 residues: Glycerol-3-phosphate dehydrogenase [NAD(P)+] (340 aa).

Ser-14, Trp-15, and Lys-109 together coordinate NADPH. Lys-109, Gly-140, and Ser-142 together coordinate sn-glycerol 3-phosphate. Residue Ala-144 coordinates NADPH. Lys-195, Asp-248, Ser-258, Arg-259, and Asn-260 together coordinate sn-glycerol 3-phosphate. The active-site Proton acceptor is the Lys-195. An NADPH-binding site is contributed by Arg-259. Positions 283 and 285 each coordinate NADPH.

Belongs to the NAD-dependent glycerol-3-phosphate dehydrogenase family.

The protein resides in the cytoplasm. The catalysed reaction is sn-glycerol 3-phosphate + NAD(+) = dihydroxyacetone phosphate + NADH + H(+). The enzyme catalyses sn-glycerol 3-phosphate + NADP(+) = dihydroxyacetone phosphate + NADPH + H(+). It participates in membrane lipid metabolism; glycerophospholipid metabolism. Functionally, catalyzes the reduction of the glycolytic intermediate dihydroxyacetone phosphate (DHAP) to sn-glycerol 3-phosphate (G3P), the key precursor for phospholipid synthesis. The protein is Glycerol-3-phosphate dehydrogenase [NAD(P)+] of Syntrophobacter fumaroxidans (strain DSM 10017 / MPOB).